The following is a 198-amino-acid chain: Nucleoside triphosphate pyrophosphatase (198 aa).

D72 functions as the Proton acceptor in the catalytic mechanism.

It belongs to the Maf family. It depends on a divalent metal cation as a cofactor.

The protein localises to the cytoplasm. It carries out the reaction a ribonucleoside 5'-triphosphate + H2O = a ribonucleoside 5'-phosphate + diphosphate + H(+). The enzyme catalyses a 2'-deoxyribonucleoside 5'-triphosphate + H2O = a 2'-deoxyribonucleoside 5'-phosphate + diphosphate + H(+). Functionally, nucleoside triphosphate pyrophosphatase. May have a dual role in cell division arrest and in preventing the incorporation of modified nucleotides into cellular nucleic acids. The chain is Nucleoside triphosphate pyrophosphatase from Acinetobacter baylyi (strain ATCC 33305 / BD413 / ADP1).